Consider the following 930-residue polypeptide: Dual serine/threonine and tyrosine protein kinase (930 aa).

Over residues 1–14 the composition is skewed to low complexity; the sequence is MEGDGVPWGSEPVS. The interval 1–22 is disordered; sequence MEGDGVPWGSEPVSGPGPGGGG. Coiled-coil stretches lie at residues 190–216 and 396–432; these read EEDL…MHHA and RKKE…KEEL. In terms of domain architecture, Protein kinase spans 653–907; it reads PKLGQELGRG…PLLGIVQPML (255 aa). ATP is bound by residues 659–667 and lysine 682; that span reads LGRGQYGVV. Aspartate 778 acts as the Proton acceptor in catalysis.

It belongs to the protein kinase superfamily. Ser/Thr protein kinase family.

Its subcellular location is the cytoplasm. It is found in the cell membrane. The protein resides in the apical cell membrane. It localises to the basolateral cell membrane. The protein localises to the cell junction. The catalysed reaction is L-seryl-[protein] + ATP = O-phospho-L-seryl-[protein] + ADP + H(+). It catalyses the reaction L-threonyl-[protein] + ATP = O-phospho-L-threonyl-[protein] + ADP + H(+). The enzyme catalyses L-tyrosyl-[protein] + ATP = O-phospho-L-tyrosyl-[protein] + ADP + H(+). Functionally, acts as a positive regulator of ERK phosphorylation downstream of fibroblast growth factor-receptor activation. Involved in the regulation of both caspase-dependent apoptosis and caspase-independent cell death. In the skin, it plays a predominant role in suppressing caspase-dependent apoptosis in response to UV stress in a range of dermal cell types. The sequence is that of Dual serine/threonine and tyrosine protein kinase (DSTYK) from Pan troglodytes (Chimpanzee).